Here is a 165-residue protein sequence, read N- to C-terminus: Large ribosomal subunit protein uL10 (165 aa).

Belongs to the universal ribosomal protein uL10 family. As to quaternary structure, part of the ribosomal stalk of the 50S ribosomal subunit. The N-terminus interacts with L11 and the large rRNA to form the base of the stalk. The C-terminus forms an elongated spine to which L12 dimers bind in a sequential fashion forming a multimeric L10(L12)X complex.

Forms part of the ribosomal stalk, playing a central role in the interaction of the ribosome with GTP-bound translation factors. The chain is Large ribosomal subunit protein uL10 from Citrobacter koseri (strain ATCC BAA-895 / CDC 4225-83 / SGSC4696).